The following is a 407-amino-acid chain: Probable tRNA sulfurtransferase (407 aa).

The THUMP domain occupies 61–165 (NEITYRLSKI…LDAIYMYEEV (105 aa)). Residues 183 to 184 (ML), 208 to 209 (HF), arginine 265, glycine 287, and glutamine 296 contribute to the ATP site.

It belongs to the ThiI family.

The protein localises to the cytoplasm. It catalyses the reaction [ThiI sulfur-carrier protein]-S-sulfanyl-L-cysteine + a uridine in tRNA + 2 reduced [2Fe-2S]-[ferredoxin] + ATP + H(+) = [ThiI sulfur-carrier protein]-L-cysteine + a 4-thiouridine in tRNA + 2 oxidized [2Fe-2S]-[ferredoxin] + AMP + diphosphate. The enzyme catalyses [ThiS sulfur-carrier protein]-C-terminal Gly-Gly-AMP + S-sulfanyl-L-cysteinyl-[cysteine desulfurase] + AH2 = [ThiS sulfur-carrier protein]-C-terminal-Gly-aminoethanethioate + L-cysteinyl-[cysteine desulfurase] + A + AMP + 2 H(+). It participates in cofactor biosynthesis; thiamine diphosphate biosynthesis. In terms of biological role, catalyzes the ATP-dependent transfer of a sulfur to tRNA to produce 4-thiouridine in position 8 of tRNAs, which functions as a near-UV photosensor. Also catalyzes the transfer of sulfur to the sulfur carrier protein ThiS, forming ThiS-thiocarboxylate. This is a step in the synthesis of thiazole, in the thiamine biosynthesis pathway. The sulfur is donated as persulfide by IscS. The chain is Probable tRNA sulfurtransferase from Staphylococcus aureus (strain JH1).